Here is a 566-residue protein sequence, read N- to C-terminus: Mucin-21 (566 aa).

Positions 1 to 24 are cleaved as a signal peptide; sequence MKMQKGNVLLMFGLLLHLEAATNS. Asn25 carries N-linked (GlcNAc...) asparagine glycosylation. The segment at 25-68 is disordered; that stretch reads NETSTSANTGSSVISSGASTATNSGSSVTSSGVSTATISGSSVT. The Extracellular portion of the chain corresponds to 25-479; that stretch reads NETSTSANTG…KPGGSLVPWE (455 aa). 28 tandem repeats follow at residues 31 to 44, 45 to 59, 60 to 74, 75 to 89, 90 to 104, 105 to 119, 120 to 134, 135 to 149, 150 to 164, 165 to 179, 180 to 194, 195 to 209, 210 to 224, 225 to 239, 244 to 254, 255 to 269, 270 to 284, 285 to 299, 300 to 314, 315 to 329, 330 to 344, 345 to 359, 360 to 374, 375 to 389, 390 to 404, 405 to 419, 420 to 434, and 435 to 449. Residues 31 to 435 are 28 X 15 AA approximate tandem repeats; the sequence is ANTGSSVISS…STTSSGANTA (405 aa). The segment at 106-456 is disordered; it reads TNSESSTTSS…SGTAALTGMH (351 aa). The helical transmembrane segment at 480-500 threads the bilayer; it reads IFLITLVSVVAAVGLFAGLFF. The Cytoplasmic portion of the chain corresponds to 501–566; the sequence is CVRNSLSLRN…MEMSGRNSGP (66 aa). The tract at residues 521–566 is cytoplasmic tail; it reads GLNHGLGPGPGGNHGAPHRPRWSPNWFWRRPVSSIAMEMSGRNSGP.

O-glycosylated. In terms of tissue distribution, expressed in lung, large intestine, thymus, and testis. Expressed in normal and malignant bronchial epithelial cells.

The protein resides in the cell membrane. The protein is Mucin-21 (MUC21) of Homo sapiens (Human).